The primary structure comprises 385 residues: ATP phosphoribosyltransferase regulatory subunit (385 aa).

This sequence belongs to the class-II aminoacyl-tRNA synthetase family. HisZ subfamily. In terms of assembly, heteromultimer composed of HisG and HisZ subunits.

It localises to the cytoplasm. Its pathway is amino-acid biosynthesis; L-histidine biosynthesis; L-histidine from 5-phospho-alpha-D-ribose 1-diphosphate: step 1/9. Functionally, required for the first step of histidine biosynthesis. May allow the feedback regulation of ATP phosphoribosyltransferase activity by histidine. The chain is ATP phosphoribosyltransferase regulatory subunit from Laribacter hongkongensis (strain HLHK9).